We begin with the raw amino-acid sequence, 362 residues long: Aminomethyltransferase (362 aa).

Belongs to the GcvT family. As to quaternary structure, the glycine cleavage system is composed of four proteins: P, T, L and H.

It carries out the reaction N(6)-[(R)-S(8)-aminomethyldihydrolipoyl]-L-lysyl-[protein] + (6S)-5,6,7,8-tetrahydrofolate = N(6)-[(R)-dihydrolipoyl]-L-lysyl-[protein] + (6R)-5,10-methylene-5,6,7,8-tetrahydrofolate + NH4(+). Functionally, the glycine cleavage system catalyzes the degradation of glycine. This Listeria welshimeri serovar 6b (strain ATCC 35897 / DSM 20650 / CCUG 15529 / CIP 8149 / NCTC 11857 / SLCC 5334 / V8) protein is Aminomethyltransferase.